The following is a 299-amino-acid chain: ATP phosphoribosyltransferase (299 aa).

This sequence belongs to the ATP phosphoribosyltransferase family. Long subfamily. The cofactor is Mg(2+).

It is found in the cytoplasm. It carries out the reaction 1-(5-phospho-beta-D-ribosyl)-ATP + diphosphate = 5-phospho-alpha-D-ribose 1-diphosphate + ATP. Its pathway is amino-acid biosynthesis; L-histidine biosynthesis; L-histidine from 5-phospho-alpha-D-ribose 1-diphosphate: step 1/9. Feedback inhibited by histidine. Its function is as follows. Catalyzes the condensation of ATP and 5-phosphoribose 1-diphosphate to form N'-(5'-phosphoribosyl)-ATP (PR-ATP). Has a crucial role in the pathway because the rate of histidine biosynthesis seems to be controlled primarily by regulation of HisG enzymatic activity. The protein is ATP phosphoribosyltransferase of Shewanella frigidimarina (strain NCIMB 400).